We begin with the raw amino-acid sequence, 701 residues long: Coiled-coil domain-containing protein 62 (701 aa).

Coiled-coil stretches lie at residues 61 to 197 (ETST…LQAR) and 241 to 342 (TCVV…QFLN). The interval 624-652 (KSAEREEESAALPDRRTSANEKDDFSPTS) is disordered. Basic and acidic residues predominate over residues 636–648 (PDRRTSANEKDDF). 2 short sequence motifs (LXXLL motif) span residues 654-658 (LQRLL) and 670-674 (LSTLL).

Interacts with ESR1 and ESR2 in the presence of estradiol/E2. The interaction with ESR2 recruits CCDC62 to ER target genes, including cyclin-D1/CCND1 AP-1 promoter. Interacts with GOPC. Highly expressed in testis, not detected in other tissues (at protein level). Expressed at low levels in the epididymis, lung, spleen, bladder, kidney, liver, muscle.

Its subcellular location is the cytoplasm. The protein localises to the nucleus. It localises to the cytoplasmic vesicle. The protein resides in the secretory vesicle. It is found in the acrosome. In terms of biological role, nuclear receptor coactivator that can enhance preferentially estrogen receptors ESR1 and ESR2 transactivation. Also modulates progesterone/PGR, glucocorticoid/NR3C1 and androgen/AR receptors transactivation, although at lower level; little effect on vitamin D receptor/VDR. Required for normal spermiogenesis. It probably plays a role in acrosome formation. The chain is Coiled-coil domain-containing protein 62 (Ccdc62) from Mus musculus (Mouse).